The chain runs to 334 residues: MRWYPWLRPDFEKLVASYQAGRGHHALLIQALPGMGDDALIYALSRYLLCQQPQGHKSCGHCRGCQLMQAGTHPDYYTLAPEKGKNTLGVDAVREVTEKLNEHARLGGAKVVWVTDAALLTDAAANALLKTLEEPPAETWFFLATREPERLLATLRSRCRLHYLAPPPEQYAVTWLSREVTMSQDALLAALRLSAGSPGAALALFQGDNWQARETLCQALAYSVPSGDWYSLLAALNHEQAPARLHWLATLLMDALKRHHGAAQVTNVDVPGLVAELANHLSPSRLQAILGDVCHIREQLMSVTGINRELLITDLLLRIEHYLQPGVVLPVPHL.

The DNA polymerase III holoenzyme complex contains at least 10 different subunits organized into 3 functionally essential subassemblies: the Pol III core, the beta sliding clamp processivity factor and the clamp-loading complex. The Pol III core (subunits alpha, epsilon and theta) contains the polymerase and the 3'-5' exonuclease proofreading activities. The polymerase is tethered to the template via the dimeric beta sliding clamp processivity factor. The clamp-loading complex (also called gamma complex) assembles the beta sliding clamp onto the primed template and plays a central role in the organization and communication at the replication fork. The clamp-loading complex contains delta, delta', psi and chi, and 3 copies of either or both of two different DnaX proteins, gamma and tau. The DNA replisome complex has a single clamp loader (3 tau and 1 each of delta, delta', psi and chi subunits) which binds 3 Pol III cores (1 core on the leading strand and 2 on the lagging strand) each with a beta sliding clamp dimer. Additional proteins in the replisome are other copies of gamma, psi and chi, Ssb, DNA helicase and RNA primase. The clamp loader hydrolyzes ATP to assemble the beta processivity factor onto the primed template and plays a central role in the organization and communication at the replication fork; the minimal complex to load the beta sliding clamp on DNA is delta, delta', gamma.

It carries out the reaction DNA(n) + a 2'-deoxyribonucleoside 5'-triphosphate = DNA(n+1) + diphosphate. Part of the beta sliding clamp loading complex, which hydrolyzes ATP to load the beta clamp onto primed DNA to form the DNA replication pre-initiation complex. DNA polymerase III is a complex, multichain enzyme responsible for most of the replicative synthesis in bacteria. This DNA polymerase also exhibits 3' to 5' exonuclease activity. The gamma complex (gamma(3),delta,delta') is thought to load beta dimers onto DNA by binding ATP which alters the complex's conformation so it can bind beta sliding clamp dimers and open them at one interface. Primed DNA is recognized, ATP is hydrolyzed releasing the gamma complex and closing the beta sliding clamp ring around the primed DNA. The sequence is that of DNA polymerase III subunit delta' (holB) from Escherichia coli (strain K12).